The sequence spans 1175 residues: Solute carrier family 9 member C1 (1175 aa).

The Extracellular portion of the chain corresponds to 1 to 39 (MEMEEISENLTASHSIKLTNMWLELLKSVFLSTPQDLPE). A helical transmembrane segment spans residues 40–59 (IILILSLICTVGAFLNMHLK). Residues 60-64 (DFPIP) lie on the Cytoplasmic side of the membrane. The helical transmembrane segment at 65–82 (LPVILFLIGCCFEILSFA) threads the bilayer. Over 83–98 (STQIQIYADAIQWMDP) the chain is Extracellular. The helical transmembrane segment at 99 to 115 (DIFFGIFTPVIIFNVAF) threads the bilayer. Residues 116–125 (DMDIYMLQKL) lie on the Cytoplasmic side of the membrane. Residues 126–151 (FWQILVITIPGFLINYTLILWYLQSV) traverse the membrane as a helical segment. The interval 126 to 213 (FWQILVITIP…SLVIYSGVVH (88 aa)) is transport core domain. Residues 152-157 (NKLSLK) lie on the Extracellular side of the membrane. A helical transmembrane segment spans residues 158 to 183 (TVPWLLFSAVLISSDPMLTSASIRDL). At 184–186 (GLS) the chain is on the cytoplasmic side. The helical transmembrane segment at 187-212 (RSLTNLINGESLLTSVLSLVIYSGVV) threads the bilayer. At 213 to 225 (HIRFKSKSVNHTL) the chain is on the extracellular side. The chain crosses the membrane as a helical span at residues 226–257 (AHKVMSTAWSYIVESFITGIVFTKVIQLWMAT). Over 258–261 (IFGD) the chain is Cytoplasmic. Residues 262-283 (DVNHITLIFSVLYLIFYVCELV) form a helical membrane-spanning segment. Over 284–286 (GMS) the chain is Extracellular. A helical transmembrane segment spans residues 287–300 (GIFTLATIGLFLNS). The Cytoplasmic segment spans residues 301–307 (TSFKPGV). A helical transmembrane segment spans residues 308–339 (EAFLLEFWNCLSFIGFLMVFTFIGLLIPAHTY). Residues 340–344 (LHISF) are Extracellular-facing. The helical transmembrane segment at 345-374 (SDVYYSLNIYFTLIVLRLLVFLLMSPILSR) threads the bilayer. The interval 345 to 446 (SDVYYSLNIY…FILPMAVTKL (102 aa)) is transport core domain. The Cytoplasmic segment spans residues 375-380 (LGHGFS). Residues 381-411 (WRWAFIMVWSEMKGTPNINMALLLAYSDISL) form a helical membrane-spanning segment. Residues 412–415 (GSER) lie on the Extracellular side of the membrane. A helical transmembrane segment spans residues 416 to 446 (ERSQILFHGVSVCVITLIVNRFILPMAVTKL). The Cytoplasmic segment spans residues 447–632 (GLRDVTSTKY…ACHRIVFTNE (186 aa)). Residues 618-698 (YMFLHACHRI…EFFSHTWLLF (81 aa)) form an ion transport-like region. Residues 633–653 (FEYTGYLVVLMSTYPMIICWI) traverse the membrane as a helical segment. Topologically, residues 654-657 (SRLK) are extracellular. A helical membrane pass occupies residues 658-684 (DIYDNEIKCANYYFLAFYILEALLKVA). At 685 to 691 (AMRKEFF) the chain is on the cytoplasmic side. The chain crosses the membrane as a helical span at residues 692–716 (SHTWLLFELGITLVGVLDIILIETD). The Extracellular portion of the chain corresponds to 717 to 724 (SISYNFDL). A helical membrane pass occupies residues 725–751 (TETVVFMNVIRLLRILRILKLVTPKLL). Residues 752–1175 (QIIDKRMSQQ…EELIEENINI (424 aa)) are Cytoplasmic-facing. Residues 1137-1146 (MKPDSERESF) are compositionally biased toward basic and acidic residues. The tract at residues 1137–1175 (MKPDSERESFETLDETSEEDNGKKENQENEELIEENINI) is disordered. Positions 1164–1175 (ENEELIEENINI) are enriched in acidic residues.

This sequence belongs to the monovalent cation:proton antiporter 1 (CPA1) transporter (TC 2.A.36) family. In terms of assembly, interacts with soluble adenylyl cyclase (sAC). Testis-specific. Specifically present in the principal piece of sperm tail (at protein level).

It is found in the cell projection. Its subcellular location is the cilium. The protein localises to the flagellum membrane. Sperm-specific solute carrier involved in intracellular pH regulation of spermatozoa. Required for sperm motility and fertility. Involved in sperm cell hyperactivation, a step needed for sperm motility which is essential late in the preparation of sperm for fertilization. Required for the expression and bicarbonate regulation of the soluble adenylyl cyclase (sAC). In Mus musculus (Mouse), this protein is Solute carrier family 9 member C1 (Slc9c1).